A 348-amino-acid chain; its full sequence is MLPTRDCVRQTPAYTPGEQPQTAGFTKLNTNENPYPPPAEIFAHLQEQLEKVRLYPDPISKELRQTAAELYGIAADQIIAGNGSDDILNIALRTFVNPCESVAFLDLTYSLYETIARVHGANIIEFPTNDKFALEGPIICPEAKLIFLASPNPPLGKHLDRDYLEATCANASGLVLIDEAYVDFSDDNHLDFLSRYDNVIISRTMSKSYSLAGLRVGFGFASRAIIEQMDKVRDSYNLDRIAQTLATAALKHHNYFEQVWQKVRQTRGRLITSLRELGFIVFDSEANFILASPPQISASELYNQLKERQILVRYFKHPRIQNYVRISIGTDGEIDRLLSAIQEIMGTN.

Positions 1 to 31 (MLPTRDCVRQTPAYTPGEQPQTAGFTKLNTN) are disordered. Residues 18–31 (EQPQTAGFTKLNTN) are compositionally biased toward polar residues. Lys207 carries the post-translational modification N6-(pyridoxal phosphate)lysine.

This sequence belongs to the class-II pyridoxal-phosphate-dependent aminotransferase family. Histidinol-phosphate aminotransferase subfamily. In terms of assembly, homodimer. Pyridoxal 5'-phosphate serves as cofactor.

The catalysed reaction is L-histidinol phosphate + 2-oxoglutarate = 3-(imidazol-4-yl)-2-oxopropyl phosphate + L-glutamate. It participates in amino-acid biosynthesis; L-histidine biosynthesis; L-histidine from 5-phospho-alpha-D-ribose 1-diphosphate: step 7/9. The sequence is that of Histidinol-phosphate aminotransferase from Microcystis aeruginosa (strain NIES-843 / IAM M-2473).